The primary structure comprises 185 residues: Potassium-transporting ATPase KdpC subunit (185 aa).

Residues 14–34 (ALSLLTGVAYPLALTGIAAVI) traverse the membrane as a helical segment.

The protein belongs to the KdpC family. The system is composed of three essential subunits: KdpA, KdpB and KdpC.

It localises to the cell inner membrane. In terms of biological role, part of the high-affinity ATP-driven potassium transport (or Kdp) system, which catalyzes the hydrolysis of ATP coupled with the electrogenic transport of potassium into the cytoplasm. This subunit acts as a catalytic chaperone that increases the ATP-binding affinity of the ATP-hydrolyzing subunit KdpB by the formation of a transient KdpB/KdpC/ATP ternary complex. The sequence is that of Potassium-transporting ATPase KdpC subunit from Cereibacter sphaeroides (strain ATCC 17023 / DSM 158 / JCM 6121 / CCUG 31486 / LMG 2827 / NBRC 12203 / NCIMB 8253 / ATH 2.4.1.) (Rhodobacter sphaeroides).